The following is a 315-amino-acid chain: MRNSVEFSQLGLKTAFNLSQNKTYTSAVKKQFFSTGAFLSNGGNIDLNKHTQKNIDSKYVACNSRSVTPPNDVASSVSKNTLRHKQRLMMAQWLMSPEVQKAKSSSSGNVGLGPNTNQPFPLNPFFKPPRPISHSLRMKITDEYLQGASIEVLARKFNTSPQRIEALIKLRRINDEFEEKKKPILHSYNEVMEKMLNACTKPEMMQFNDGNDIPLRSNPVSLWKSLPEGETFTPQEAAKILKWPSIEELNMRQNATHFHKTSDEHKDLNEDEELISSSPSEVGKRVFRLIDLSTGNVYRRDTGGDIYVKRKKSTT.

A mitochondrion-targeting transit peptide spans 1 to 66; it reads MRNSVEFSQL…SKYVACNSRS (66 aa).

Belongs to the mitochondrion-specific ribosomal protein mS45 family. In terms of assembly, component of the mitochondrial small ribosomal subunit (mt-SSU). Mature yeast 74S mitochondrial ribosomes consist of a small (37S) and a large (54S) subunit. The 37S small subunit contains a 15S ribosomal RNA (15S mt-rRNA) and at least 32 different proteins. The 54S large subunit contains a 21S rRNA (21S mt-rRNA) and at least 45 different proteins.

The protein resides in the mitochondrion. In terms of biological role, component of the mitochondrial ribosome (mitoribosome), a dedicated translation machinery responsible for the synthesis of mitochondrial genome-encoded proteins, including at least some of the essential transmembrane subunits of the mitochondrial respiratory chain. The mitoribosomes are attached to the mitochondrial inner membrane and translation products are cotranslationally integrated into the membrane. Required for mitochondrial protein synthesis. Has a role in mitochondrial integrity and cell respiration. The polypeptide is Small ribosomal subunit protein mS45 (bot1) (Schizosaccharomyces pombe (strain 972 / ATCC 24843) (Fission yeast)).